Consider the following 355-residue polypeptide: Peptide chain release factor 1 (355 aa).

An N5-methylglutamine modification is found at Q231. The span at S280–K291 shows a compositional bias: basic and acidic residues. The disordered stretch occupies residues S280–I303.

It belongs to the prokaryotic/mitochondrial release factor family. Methylated by PrmC. Methylation increases the termination efficiency of RF1.

It localises to the cytoplasm. In terms of biological role, peptide chain release factor 1 directs the termination of translation in response to the peptide chain termination codons UAG and UAA. The protein is Peptide chain release factor 1 of Campylobacter jejuni subsp. jejuni serotype O:6 (strain 81116 / NCTC 11828).